Here is a 514-residue protein sequence, read N- to C-terminus: 2-isopropylmalate synthase (514 aa).

The 263-residue stretch at 5–267 (IYIFDTTLRD…HTDIVTEEIT (263 aa)) folds into the Pyruvate carboxyltransferase domain. Residues aspartate 14, histidine 202, histidine 204, and asparagine 238 each coordinate Mn(2+). Positions 392–514 (KLKYYQVFTG…SKDLQKISAN (123 aa)) are regulatory domain.

It belongs to the alpha-IPM synthase/homocitrate synthase family. LeuA type 1 subfamily. Homodimer. Mn(2+) is required as a cofactor.

Its subcellular location is the cytoplasm. It carries out the reaction 3-methyl-2-oxobutanoate + acetyl-CoA + H2O = (2S)-2-isopropylmalate + CoA + H(+). The protein operates within amino-acid biosynthesis; L-leucine biosynthesis; L-leucine from 3-methyl-2-oxobutanoate: step 1/4. Its function is as follows. Catalyzes the condensation of the acetyl group of acetyl-CoA with 3-methyl-2-oxobutanoate (2-ketoisovalerate) to form 3-carboxy-3-hydroxy-4-methylpentanoate (2-isopropylmalate). This is 2-isopropylmalate synthase from Clostridium kluyveri (strain NBRC 12016).